We begin with the raw amino-acid sequence, 122 residues long: Large ribosomal subunit protein bL12 (122 aa).

Belongs to the bacterial ribosomal protein bL12 family. In terms of assembly, homodimer. Part of the ribosomal stalk of the 50S ribosomal subunit. Forms a multimeric L10(L12)X complex, where L10 forms an elongated spine to which 2 to 4 L12 dimers bind in a sequential fashion. Binds GTP-bound translation factors.

Functionally, forms part of the ribosomal stalk which helps the ribosome interact with GTP-bound translation factors. Is thus essential for accurate translation. The polypeptide is Large ribosomal subunit protein bL12 (Pseudomonas entomophila (strain L48)).